We begin with the raw amino-acid sequence, 346 residues long: HLA class I histocompatibility antigen, alpha chain F (346 aa).

The N-terminal stretch at 1–21 is a signal peptide; sequence MAPRSLLLLLSGALALTDTWA. An alpha-1 region spans residues 22–111; it reads GSHSLRYFST…LLRRYNQSEA (90 aa). At 22-305 the chain is on the extracellular side; sequence GSHSLRYFST…EQSPQPTIPI (284 aa). A peptide antigen contacts are provided by Asn91 and Arg105. N-linked (GlcNAc...) asparagine glycosylation is present at Asn107. Positions 112–203 are alpha-2; that stretch reads GSHTLQGMNG…ENGKETLQRA (92 aa). 2 disulfides stabilise this stretch: Cys122–Cys185 and Cys224–Cys280. Thr164, Tyr168, and Glu176 together coordinate a peptide antigen. The segment at 204–295 is alpha-3; it reads DPPKAHVAHH…GLPQPLILRW (92 aa). The 91-residue stretch at 206-296 folds into the Ig-like C1-type domain; the sequence is PKAHVAHHPI…LPQPLILRWE (91 aa). Positions 296-305 are connecting peptide; sequence EQSPQPTIPI. A helical membrane pass occupies residues 306 to 329; the sequence is VGIVAGLVVLGAVVTGAVVAAVMW. Topologically, residues 330-346 are cytoplasmic; it reads RKKSSDRNRGSYSQAAV. The short motif at 336 to 338 is the Sorting signal sequence; Golgi-retention signal; ER-retention signal element; it reads RNR.

Belongs to the MHC class I family. Forms a heterotrimer with B2M and a self-peptide. Binds a diverse number of peptides ranging from 7 to more than 30 amino acids. Peptide-bound HLA-F-B2M interacts with LILRB1 and LILRB2 but not with KIR3DS1 or KIR3DL2; this interaction is direct. The OC form interacts with KIR3DS1, KIR2DS4 and KIR3DL2; this interaction is direct. Interacts with TAP1-TAP2 complex and CALR; this interaction is required for appropriate folding and peptide loading. Interacts with the coat protein complex II and 14-3-3 proteins; these interactions likely control the anterograde ER-to-Golgi transport of HLA-F. HLA-F-B2M complex interacts with the heavy chain of other MHC class I molecules including HLA-A and HLA-E; this interaction may regulate the intracellular trafficking and the stability of peptide-free MHC class I OCs. N-glycosylated. Expressed in resting B cells (at protein level). Expressed in secondary lymphoid organs rich in B and T cells such as the tonsils, spleen, and thymus (at protein level). Expressed in the endothelial cells of the tonsils. Expressed on activated lymphoid cells including B cells, NK cells, CD4+ T cells and memory T cells (at protein level). Expressed in motor neurons of spinal cord.

It localises to the cell membrane. The protein resides in the early endosome membrane. It is found in the lysosome membrane. Non-classical major histocompatibility class Ib molecule postulated to play a role in immune surveillance, immune tolerance and inflammation. Functions in two forms, as a heterotrimeric complex with B2M/beta-2 microglobulin and a peptide (peptide-bound HLA-F-B2M) and as an open conformer (OC) devoid of peptide and B2M (peptide-free OC). In complex with B2M, presents non-canonical self-peptides carrying post-translational modifications, particularly phosphorylated self-peptides. Peptide-bound HLA-F-B2M acts as a ligand for LILRB1 inhibitory receptor, a major player in maternal-fetal tolerance. Peptide-free OC acts as a ligand for KIR3DS1 and KIR3DL2 receptors. Upon interaction with activating KIR3DS1 receptor on NK cells, triggers NK cell degranulation and anti-viral cytokine production. Through interaction with KIR3DL2 receptor, inhibits NK and T cell effector functions. May interact with other MHC class I OCs to cross-present exogenous viral, tumor or minor histompatibility antigens to cytotoxic CD8+ T cells, triggering effector and memory responses. May play a role in inflammatory responses in the peripheral nervous system. Through interaction with KIR3DL2, may protect motor neurons from astrocyte-induced toxicity. The chain is HLA class I histocompatibility antigen, alpha chain F from Homo sapiens (Human).